Here is a 272-residue protein sequence, read N- to C-terminus: Ribosomal RNA small subunit methyltransferase J (272 aa).

S-adenosyl-L-methionine-binding positions include 120–121, 136–137, 171–172, and Asp188; these read RD, ER, and SS.

It belongs to the methyltransferase superfamily. RsmJ family.

It is found in the cytoplasm. It carries out the reaction guanosine(1516) in 16S rRNA + S-adenosyl-L-methionine = N(2)-methylguanosine(1516) in 16S rRNA + S-adenosyl-L-homocysteine + H(+). In terms of biological role, specifically methylates the guanosine in position 1516 of 16S rRNA. The sequence is that of Ribosomal RNA small subunit methyltransferase J from Colwellia psychrerythraea (strain 34H / ATCC BAA-681) (Vibrio psychroerythus).